Reading from the N-terminus, the 407-residue chain is Na(+)-translocating NADH-quinone reductase subunit F (407 aa).

Residues Ile-6 to Val-26 traverse the membrane as a helical segment. One can recognise a 2Fe-2S ferredoxin-type domain in the interval Gly-35 to Val-127. Residues Cys-70, Cys-76, Cys-79, and Cys-111 each coordinate [2Fe-2S] cluster. Residues Val-130 to Lys-269 form the FAD-binding FR-type domain.

It belongs to the NqrF family. In terms of assembly, composed of six subunits; NqrA, NqrB, NqrC, NqrD, NqrE and NqrF. [2Fe-2S] cluster is required as a cofactor. It depends on FAD as a cofactor.

Its subcellular location is the cell inner membrane. The catalysed reaction is a ubiquinone + n Na(+)(in) + NADH + H(+) = a ubiquinol + n Na(+)(out) + NAD(+). Its function is as follows. NQR complex catalyzes the reduction of ubiquinone-1 to ubiquinol by two successive reactions, coupled with the transport of Na(+) ions from the cytoplasm to the periplasm. The first step is catalyzed by NqrF, which accepts electrons from NADH and reduces ubiquinone-1 to ubisemiquinone by a one-electron transfer pathway. In Pseudomonas aeruginosa (strain UCBPP-PA14), this protein is Na(+)-translocating NADH-quinone reductase subunit F.